Here is a 232-residue protein sequence, read N- to C-terminus: Ubiquinone biosynthesis O-methyltransferase (232 aa).

S-adenosyl-L-methionine is bound by residues R36, G55, D76, and M120.

Belongs to the methyltransferase superfamily. UbiG/COQ3 family.

It catalyses the reaction a 3-demethylubiquinol + S-adenosyl-L-methionine = a ubiquinol + S-adenosyl-L-homocysteine + H(+). The catalysed reaction is a 3-(all-trans-polyprenyl)benzene-1,2-diol + S-adenosyl-L-methionine = a 2-methoxy-6-(all-trans-polyprenyl)phenol + S-adenosyl-L-homocysteine + H(+). It functions in the pathway cofactor biosynthesis; ubiquinone biosynthesis. Its function is as follows. O-methyltransferase that catalyzes the 2 O-methylation steps in the ubiquinone biosynthetic pathway. The sequence is that of Ubiquinone biosynthesis O-methyltransferase from Paraburkholderia phytofirmans (strain DSM 17436 / LMG 22146 / PsJN) (Burkholderia phytofirmans).